The following is a 339-amino-acid chain: 3-isopropylmalate dehydrogenase (339 aa).

Substrate-binding residues include Arg-87, Arg-97, Arg-124, and Asp-214. Mg(2+)-binding residues include Asp-214, Asp-238, and Asp-242. 274-286 contributes to the NAD(+) binding site; that stretch reads GSAPDIAGQGIAD.

This sequence belongs to the isocitrate and isopropylmalate dehydrogenases family. LeuB type 2 subfamily. As to quaternary structure, homodimer. The cofactor is Mg(2+). Mn(2+) is required as a cofactor.

It localises to the cytoplasm. It catalyses the reaction (2R,3S)-3-isopropylmalate + NAD(+) = 4-methyl-2-oxopentanoate + CO2 + NADH. The protein operates within amino-acid biosynthesis; L-leucine biosynthesis; L-leucine from 3-methyl-2-oxobutanoate: step 3/4. Catalyzes the oxidation of 3-carboxy-2-hydroxy-4-methylpentanoate (3-isopropylmalate) to 3-carboxy-4-methyl-2-oxopentanoate. The product decarboxylates to 4-methyl-2 oxopentanoate. The chain is 3-isopropylmalate dehydrogenase from Mycobacterium ulcerans (strain Agy99).